Consider the following 232-residue polypeptide: Flagellar L-ring protein (232 aa).

Positions 1–21 are cleaved as a signal peptide; sequence MQKYALHAYPVMALMVATLTG. Cys22 carries N-palmitoyl cysteine lipidation. Cys22 is lipidated: S-diacylglycerol cysteine.

It belongs to the FlgH family. The basal body constitutes a major portion of the flagellar organelle and consists of four rings (L,P,S, and M) mounted on a central rod.

It localises to the cell outer membrane. The protein localises to the bacterial flagellum basal body. Assembles around the rod to form the L-ring and probably protects the motor/basal body from shearing forces during rotation. This is Flagellar L-ring protein from Salmonella choleraesuis (strain SC-B67).